Reading from the N-terminus, the 389-residue chain is Major outer membrane porin (389 aa).

Positions 1 to 22 are cleaved as a signal peptide; the sequence is MKKLLKSALLFAATGSALSLQA.

It belongs to the chlamydial porin (CP) (TC 1.B.2) family. In terms of assembly, part of a disulfide cross-linked outer membrane complex (COMC) composed of the major outer membrane porin (MOMP), the small cysteine-rich protein (OmcA) and the large cysteine-rich periplasmic protein (OmcB).

Its subcellular location is the cell outer membrane. Its function is as follows. In elementary bodies (EBs, the infectious stage, which is able to survive outside the host cell) provides the structural integrity of the outer envelope through disulfide cross-links with the small cysteine-rich protein and the large cysteine-rich periplasmic protein. It has been described in publications as the Sarkosyl-insoluble COMC (Chlamydia outer membrane complex), and serves as the functional equivalent of peptidoglycan. Permits diffusion of specific solutes through the outer membrane. The polypeptide is Major outer membrane porin (ompA) (Chlamydia abortus (strain DSM 27085 / S26/3) (Chlamydophila abortus)).